The primary structure comprises 161 residues: MTIAVFPGSFDPLTNGHVDLITRASRMFDQLIVTVGKNTSKQGLFTTSERVAFIEAAIAALPNVTVQVEQGLTVDFMKSVQATVLVRGIRNSTDFEYEQGIANLNRHLAPQVDTACLMADPQYQYVSSSLLKEVARFGGDLKQLVPSMVAKAMVARLEGDH.

Residue S9 participates in substrate binding. ATP contacts are provided by residues 9 to 10 and H17; that span reads SF. Positions 41, 73, and 87 each coordinate substrate. Residues 88–90, E98, and 123–129 each bind ATP; these read GIR and YQYVSSS.

It belongs to the bacterial CoaD family. As to quaternary structure, homohexamer. Requires Mg(2+) as cofactor.

It localises to the cytoplasm. It carries out the reaction (R)-4'-phosphopantetheine + ATP + H(+) = 3'-dephospho-CoA + diphosphate. It participates in cofactor biosynthesis; coenzyme A biosynthesis; CoA from (R)-pantothenate: step 4/5. In terms of biological role, reversibly transfers an adenylyl group from ATP to 4'-phosphopantetheine, yielding dephospho-CoA (dPCoA) and pyrophosphate. The polypeptide is Phosphopantetheine adenylyltransferase (Levilactobacillus brevis (strain ATCC 367 / BCRC 12310 / CIP 105137 / JCM 1170 / LMG 11437 / NCIMB 947 / NCTC 947) (Lactobacillus brevis)).